Consider the following 253-residue polypeptide: 3-deoxy-manno-octulosonate cytidylyltransferase (253 aa).

This sequence belongs to the KdsB family.

It localises to the cytoplasm. The catalysed reaction is 3-deoxy-alpha-D-manno-oct-2-ulosonate + CTP = CMP-3-deoxy-beta-D-manno-octulosonate + diphosphate. Its pathway is nucleotide-sugar biosynthesis; CMP-3-deoxy-D-manno-octulosonate biosynthesis; CMP-3-deoxy-D-manno-octulosonate from 3-deoxy-D-manno-octulosonate and CTP: step 1/1. The protein operates within bacterial outer membrane biogenesis; lipopolysaccharide biosynthesis. Activates KDO (a required 8-carbon sugar) for incorporation into bacterial lipopolysaccharide in Gram-negative bacteria. This is 3-deoxy-manno-octulosonate cytidylyltransferase from Geotalea daltonii (strain DSM 22248 / JCM 15807 / FRC-32) (Geobacter daltonii).